Here is a 275-residue protein sequence, read N- to C-terminus: Chemotaxis protein methyltransferase 1 (275 aa).

A CheR-type methyltransferase domain is found at Met-1 to Lys-275. S-adenosyl-L-methionine contacts are provided by residues Asn-76, Thr-78, Arg-82, Glu-117, Asp-145, Asn-201–Leu-202, and Arg-218–Asn-219.

The catalysed reaction is L-glutamyl-[protein] + S-adenosyl-L-methionine = [protein]-L-glutamate 5-O-methyl ester + S-adenosyl-L-homocysteine. In terms of biological role, methylation of the membrane-bound methyl-accepting chemotaxis proteins (MCP) to form gamma-glutamyl methyl ester residues in MCP. In Vibrio cholerae serotype O1 (strain ATCC 39315 / El Tor Inaba N16961), this protein is Chemotaxis protein methyltransferase 1 (cheR1).